The sequence spans 160 residues: Eukaryotic translation initiation factor 5A-2 (160 aa).

Residues 1–12 (MSDEEHHFESKA) show a composition bias toward basic and acidic residues. A disordered region spans residues 1 to 21 (MSDEEHHFESKADAGASKTFP). Hypusine is present on Lys-52.

This sequence belongs to the eIF-5A family. In terms of processing, lys-52 undergoes hypusination, a unique post-translational modification that consists in the addition of a butylamino group from spermidine to lysine side chain, leading to the formation of the unusual amino acid hypusine. eIF-5As are the only known proteins to undergo this modification, which is essential for their function.

Its function is as follows. Translation factor that promotes translation elongation and termination, particularly upon ribosome stalling at specific amino acid sequence contexts. Binds between the exit (E) and peptidyl (P) site of the ribosome and promotes rescue of stalled ribosome: specifically required for efficient translation of polyproline-containing peptides as well as other motifs that stall the ribosome. Acts as a ribosome quality control (RQC) cofactor by joining the RQC complex to facilitate peptidyl transfer during CAT tailing step. The chain is Eukaryotic translation initiation factor 5A-2 from Solanum lycopersicum (Tomato).